The sequence spans 185 residues: Peptidyl-tRNA hydrolase (185 aa).

Y14 is a tRNA binding site. Residue H19 is the Proton acceptor of the active site. Residues F64, N66, and N112 each contribute to the tRNA site.

Belongs to the PTH family. In terms of assembly, monomer.

It is found in the cytoplasm. It carries out the reaction an N-acyl-L-alpha-aminoacyl-tRNA + H2O = an N-acyl-L-amino acid + a tRNA + H(+). In terms of biological role, hydrolyzes ribosome-free peptidyl-tRNAs (with 1 or more amino acids incorporated), which drop off the ribosome during protein synthesis, or as a result of ribosome stalling. Catalyzes the release of premature peptidyl moieties from peptidyl-tRNA molecules trapped in stalled 50S ribosomal subunits, and thus maintains levels of free tRNAs and 50S ribosomes. The protein is Peptidyl-tRNA hydrolase of Caldanaerobacter subterraneus subsp. tengcongensis (strain DSM 15242 / JCM 11007 / NBRC 100824 / MB4) (Thermoanaerobacter tengcongensis).